We begin with the raw amino-acid sequence, 178 residues long: Large ribosomal subunit protein bL17 (178 aa).

2 stretches are compositionally biased toward low complexity: residues 123–139 and 151–160; these read KAPA…NTAT and EDAAAQAPVA. The tract at residues 123–178 is disordered; that stretch reads KAPASAADAKAQINTATEAKEAEPEAPAEDAAAQAPVADEQKAAEVDEKAEEKPEA. Positions 161 to 178 are enriched in basic and acidic residues; it reads DEQKAAEVDEKAEEKPEA.

The protein belongs to the bacterial ribosomal protein bL17 family. As to quaternary structure, part of the 50S ribosomal subunit. Contacts protein L32.

In Cutibacterium acnes (strain DSM 16379 / KPA171202) (Propionibacterium acnes), this protein is Large ribosomal subunit protein bL17.